The sequence spans 196 residues: Lipoprotein signal peptidase (196 aa).

3 helical membrane passes run 43-63 (LMLK…GISF), 75-95 (AVFI…MVCS), and 100-120 (GFAG…DRLF). Residues Asp-126 and Asp-144 contribute to the active site. Residues 135-155 (YSFPVFNLADCFITIGVIILI) traverse the membrane as a helical segment.

This sequence belongs to the peptidase A8 family.

Its subcellular location is the cell inner membrane. It catalyses the reaction Release of signal peptides from bacterial membrane prolipoproteins. Hydrolyzes -Xaa-Yaa-Zaa-|-(S,diacylglyceryl)Cys-, in which Xaa is hydrophobic (preferably Leu), and Yaa (Ala or Ser) and Zaa (Gly or Ala) have small, neutral side chains.. It functions in the pathway protein modification; lipoprotein biosynthesis (signal peptide cleavage). Its function is as follows. This protein specifically catalyzes the removal of signal peptides from prolipoproteins. This is Lipoprotein signal peptidase from Rickettsia canadensis (strain McKiel).